Consider the following 281-residue polypeptide: ATP phosphoribosyltransferase (281 aa).

This sequence belongs to the ATP phosphoribosyltransferase family. Long subfamily. The cofactor is Mg(2+).

Its subcellular location is the cytoplasm. It carries out the reaction 1-(5-phospho-beta-D-ribosyl)-ATP + diphosphate = 5-phospho-alpha-D-ribose 1-diphosphate + ATP. The protein operates within amino-acid biosynthesis; L-histidine biosynthesis; L-histidine from 5-phospho-alpha-D-ribose 1-diphosphate: step 1/9. Feedback inhibited by histidine. Its function is as follows. Catalyzes the condensation of ATP and 5-phosphoribose 1-diphosphate to form N'-(5'-phosphoribosyl)-ATP (PR-ATP). Has a crucial role in the pathway because the rate of histidine biosynthesis seems to be controlled primarily by regulation of HisG enzymatic activity. This Corynebacterium aurimucosum (strain ATCC 700975 / DSM 44827 / CIP 107346 / CN-1) (Corynebacterium nigricans) protein is ATP phosphoribosyltransferase.